A 268-amino-acid chain; its full sequence is Tryptophan synthase alpha chain (268 aa).

Catalysis depends on proton acceptor residues Glu-49 and Asp-60.

It belongs to the TrpA family. As to quaternary structure, tetramer of two alpha and two beta chains.

It catalyses the reaction (1S,2R)-1-C-(indol-3-yl)glycerol 3-phosphate + L-serine = D-glyceraldehyde 3-phosphate + L-tryptophan + H2O. Its pathway is amino-acid biosynthesis; L-tryptophan biosynthesis; L-tryptophan from chorismate: step 5/5. Its function is as follows. The alpha subunit is responsible for the aldol cleavage of indoleglycerol phosphate to indole and glyceraldehyde 3-phosphate. This is Tryptophan synthase alpha chain from Escherichia coli O6:H1 (strain CFT073 / ATCC 700928 / UPEC).